Reading from the N-terminus, the 460-residue chain is UDP-glucuronate 4-epimerase 6 (460 aa).

A run of 2 helical transmembrane segments spans residues 41-61 (ATLL…PPLS) and 111-131 (GLSV…SLAL). 113 to 144 (SVLVTGAAGFVGSHCSLALRKRGDGVLGFDNF) is an NAD(+) binding site. The active-site Proton acceptor is the Tyr-263.

The protein belongs to the NAD(P)-dependent epimerase/dehydratase family. As to quaternary structure, homodimer. As to expression, in roots, leaf veins, siliques, flowers, pollen and stems.

The protein localises to the golgi apparatus. Its subcellular location is the golgi stack membrane. The catalysed reaction is UDP-alpha-D-glucuronate = UDP-alpha-D-galacturonate. Its function is as follows. Involved in the synthesis of the negatively charged monosaccharide that forms the backbone of pectic cell wall components. In Arabidopsis thaliana (Mouse-ear cress), this protein is UDP-glucuronate 4-epimerase 6 (GAE6).